The sequence spans 709 residues: F-box only protein 40 (709 aa).

The segment at 53-112 (EHQLLCPLEQVPCLNSEYGCPLSMSRHKLAKHLQVCPASVVCCSMEWNRWPNVDSETTLH) adopts a TRAF-type zinc-finger fold. A disordered region spans residues 232–280 (TNSSASCESKNKNDSEKEQISSGHNMVEGEGAPKKKEPQENQKQQDVRT). 2 stretches are compositionally biased toward basic and acidic residues: residues 240 to 250 (SKNKNDSEKEQ) and 262 to 277 (GAPK…KQQD). An F-box domain is found at 570 to 624 (QNSLTSLPLEILKYIAGFLDSVSLAQLSQVSVLMRNICATLLQERGMVLLQWKKK).

In terms of assembly, directly interacts with SKP1 and CUL1. In terms of tissue distribution, expressed only in heart and skeletal muscle.

It is found in the cytoplasm. Probable substrate-recognition component of the SCF (SKP1-CUL1-F-box protein)-type E3 ubiquitin ligase complex that may function in myogenesis. In Homo sapiens (Human), this protein is F-box only protein 40 (FBXO40).